Consider the following 588-residue polypeptide: Histone deacetylase 9 (588 aa).

S22 bears the Phosphoserine mark. The tract at residues 23–27 (PLDLR) is interaction with CTBP1. Over residues 110–147 (RQEQEVERHRREQQLPPLRGKDRGRERAVASTEVKQKL) the composition is skewed to basic and acidic residues. 3 disordered regions span residues 110–170 (RQEQ…HSVG), 183–242 (TSLD…SSPL), and 264–301 (SSVS…PHPE). Positions 136–154 (RAVASTEVKQKLQEFLLSK) are interaction with MEF2. Composition is skewed to polar residues over residues 154-166 (KSAT…NGKN) and 185-199 (LDQS…SPSY). An interaction with MAPK10 region spans residues 175-343 (LWYTAAHHTS…LPAVPSPLNA (169 aa)). Residues 208-219 (DSKDDFPLRKTA) show a composition bias toward basic and acidic residues. The interaction with ETV6 stretch occupies residues 218-261 (TASEPNLKVRSRLKQKVAERRSSPLLRRKDGNLVTSFKKRVFEV). S220 is modified (phosphoserine). Basic and acidic residues predominate over residues 233-242 (KVAERRSSPL). Position 240 is a phosphoserine; by DYRK1B (S240). The span at 264-284 (SSVSSSSPGSGPSSPNNGPAG) shows a compositional bias: low complexity. A Phosphoserine modification is found at S450. The interval 493–533 (QLKQPGSHLEEAEEELQGDQSMEDRAASKDNSARSDSSACV) is disordered. Residues 514 to 525 (MEDRAASKDNSA) show a composition bias toward basic and acidic residues. S552 bears the Phosphoserine mark.

It belongs to the histone deacetylase family. HD type 2 subfamily. As to quaternary structure, homodimer. Interacts with ETV6. Interacts with MEF2, HDAC1, HDAC3, HDAC4, HDAC5, CTBP1 and MAPK10. The phosphorylated form interacts with 14-3-3. Interacts with FOXP3 in the absence of T-cell stimulation. In terms of processing, sumoylated. Post-translationally, phosphorylated on Ser-220 and Ser-450; which promotes 14-3-3-binding, impairs interaction with MEF2, and antagonizes antimyogenic activity. Phosphorylated on Ser-240 by DYRK1B; which impairs nuclear accumulation. Phosphorylated by the PKC kinases PKN1 and PKN2, impairing nuclear import. Expressed at high levels in heart, brain and spleen. Expressed in skeletal muscle.

The protein resides in the nucleus. The enzyme catalyses N(6)-acetyl-L-lysyl-[histone] + H2O = L-lysyl-[histone] + acetate. Devoided of intrinsic deacetylase activity, promotes the deacetylation of lysine residues on the N-terminal part of the core histones (H2A, H2B, H3 and H4) by recruiting HDAC1 and HDAC3. Histone deacetylation gives a tag for epigenetic repression and plays an important role in transcriptional regulation, cell cycle progression and developmental events. Represses MEF2-dependent transcription, inhibits skeletal myogenesis and may be involved in heart development. Protects neurons from apoptosis, both by inhibiting JUN phosphorylation by MAPK10 and by repressing JUN transcription via HDAC1 recruitment to JUN promoter. The chain is Histone deacetylase 9 (Hdac9) from Mus musculus (Mouse).